Reading from the N-terminus, the 136-residue chain is ATP synthase epsilon chain (136 aa).

Belongs to the ATPase epsilon chain family. F-type ATPases have 2 components, CF(1) - the catalytic core - and CF(0) - the membrane proton channel. CF(1) has five subunits: alpha(3), beta(3), gamma(1), delta(1), epsilon(1). CF(0) has three main subunits: a, b and c.

Its subcellular location is the cell inner membrane. Produces ATP from ADP in the presence of a proton gradient across the membrane. This Hydrogenobaculum sp. (strain Y04AAS1) protein is ATP synthase epsilon chain.